The following is a 180-amino-acid chain: Adenine phosphoribosyltransferase (180 aa).

Ala2 is modified (N-acetylalanine). Residues Ser15 and Ser30 each carry the phosphoserine modification. Tyr60 is modified (phosphotyrosine). A Phosphoserine modification is found at Ser66. At Lys114 the chain carries N6-acetyllysine. Thr135 is modified (phosphothreonine).

The protein belongs to the purine/pyrimidine phosphoribosyltransferase family. As to quaternary structure, homodimer.

Its subcellular location is the cytoplasm. It carries out the reaction AMP + diphosphate = 5-phospho-alpha-D-ribose 1-diphosphate + adenine. The protein operates within purine metabolism; AMP biosynthesis via salvage pathway; AMP from adenine: step 1/1. Functionally, catalyzes a salvage reaction resulting in the formation of AMP, that is energically less costly than de novo synthesis. This Dipodillus campestris (North African gerbil) protein is Adenine phosphoribosyltransferase.